Reading from the N-terminus, the 243-residue chain is Ubiquinone/menaquinone biosynthesis C-methyltransferase UbiE (243 aa).

S-adenosyl-L-methionine-binding positions include T69, D90, and 116-117; that span reads DA.

This sequence belongs to the class I-like SAM-binding methyltransferase superfamily. MenG/UbiE family.

It carries out the reaction a 2-demethylmenaquinol + S-adenosyl-L-methionine = a menaquinol + S-adenosyl-L-homocysteine + H(+). The catalysed reaction is a 2-methoxy-6-(all-trans-polyprenyl)benzene-1,4-diol + S-adenosyl-L-methionine = a 5-methoxy-2-methyl-3-(all-trans-polyprenyl)benzene-1,4-diol + S-adenosyl-L-homocysteine + H(+). It functions in the pathway quinol/quinone metabolism; menaquinone biosynthesis; menaquinol from 1,4-dihydroxy-2-naphthoate: step 2/2. The protein operates within cofactor biosynthesis; ubiquinone biosynthesis. Its function is as follows. Methyltransferase required for the conversion of demethylmenaquinol (DMKH2) to menaquinol (MKH2) and the conversion of 2-polyprenyl-6-methoxy-1,4-benzoquinol (DDMQH2) to 2-polyprenyl-3-methyl-6-methoxy-1,4-benzoquinol (DMQH2). The sequence is that of Ubiquinone/menaquinone biosynthesis C-methyltransferase UbiE from Paraburkholderia phytofirmans (strain DSM 17436 / LMG 22146 / PsJN) (Burkholderia phytofirmans).